We begin with the raw amino-acid sequence, 437 residues long: MNAYQNKNITIIGLGKTGLSCVDYLLSQQANIRVIDTRKKPTGIDKLPQNIPLHTGSLNQEWLLESDMIVISPGLAVKTPEIQTALKAGVEVIGDIELFCRAATKPIVGITGSNGKSTVTTLVYEMAKAAGVKVGMGGNIGIPALSLLNEDCELYVLELSSFQLETTYSLKAAAATVLNVTEDHMDRYMDLEDYRQAKLRIYHNAEVGVLNNEDKLTFGEGENQARQTVSFAENSADYWLKTENGKQYLMVKDEVILPCEEVTLVGRHNYMNILAATALAQAVGINLDSIRTALRHFKGLDHRFQLVHQANGIRWINDSKATNVGSTVAALAGLYIEGKLHLLLGGDGKGADFSELAELINQPHIICYCFGRDGVQLAKFSSQSYLFETMEQAIEFLRPTLQSGDMVLLSPACASLDQFASFEKRGEEFTHLAQYSA.

112-118 (GSNGKST) provides a ligand contact to ATP.

It belongs to the MurCDEF family.

It localises to the cytoplasm. It catalyses the reaction UDP-N-acetyl-alpha-D-muramoyl-L-alanine + D-glutamate + ATP = UDP-N-acetyl-alpha-D-muramoyl-L-alanyl-D-glutamate + ADP + phosphate + H(+). It functions in the pathway cell wall biogenesis; peptidoglycan biosynthesis. Functionally, cell wall formation. Catalyzes the addition of glutamate to the nucleotide precursor UDP-N-acetylmuramoyl-L-alanine (UMA). This is UDP-N-acetylmuramoylalanine--D-glutamate ligase from Haemophilus influenzae (strain 86-028NP).